A 238-amino-acid polypeptide reads, in one-letter code: 7-cyano-7-deazaguanine synthase (238 aa).

15–25 (FSGGQDSTTCL) lines the ATP pocket. 4 residues coordinate Zn(2+): cysteine 203, cysteine 218, cysteine 221, and cysteine 224.

This sequence belongs to the QueC family. Zn(2+) is required as a cofactor.

The enzyme catalyses 7-carboxy-7-deazaguanine + NH4(+) + ATP = 7-cyano-7-deazaguanine + ADP + phosphate + H2O + H(+). It participates in purine metabolism; 7-cyano-7-deazaguanine biosynthesis. In terms of biological role, catalyzes the ATP-dependent conversion of 7-carboxy-7-deazaguanine (CDG) to 7-cyano-7-deazaguanine (preQ(0)). The chain is 7-cyano-7-deazaguanine synthase from Alkalilimnicola ehrlichii (strain ATCC BAA-1101 / DSM 17681 / MLHE-1).